The primary structure comprises 27 residues: Paragonial peptide PS-1 (27 aa).

A compositionally biased stretch (low complexity) spans Asp-1–Ala-17. The disordered stretch occupies residues Asp-1–Ser-27.

In terms of tissue distribution, main cells of the accessory glands of males (paragonial gland).

Its subcellular location is the secreted. In terms of biological role, represses female sexual receptivity and stimulates oviposition. This peptide has a low activity. The sequence is that of Paragonial peptide PS-1 (PapC) from Drosophila funebris (Fruit fly).